A 516-amino-acid polypeptide reads, in one-letter code: Arabinose import ATP-binding protein AraG (516 aa).

2 ABC transporter domains span residues 5-240 (LRFD…MVGR) and 240-497 (REIS…LPQS). 37–44 (GENGAGKS) contributes to the ATP binding site.

It belongs to the ABC transporter superfamily. Arabinose importer (TC 3.A.1.2.2) family. In terms of assembly, the complex is composed of two ATP-binding proteins (AraG), two transmembrane proteins (AraH) and a solute-binding protein (AraF).

Its subcellular location is the cell inner membrane. It catalyses the reaction L-arabinose(out) + ATP + H2O = L-arabinose(in) + ADP + phosphate + H(+). Functionally, part of the ABC transporter complex AraFGH involved in arabinose import. Responsible for energy coupling to the transport system. This is Arabinose import ATP-binding protein AraG from Paraburkholderia xenovorans (strain LB400).